The following is a 673-amino-acid chain: UvrABC system protein B (673 aa).

Residues Glu-29–Asp-188 enclose the Helicase ATP-binding domain. Residue Gly-42 to Thr-49 participates in ATP binding. The Beta-hairpin motif lies at Tyr-95–Ile-118. Residues Gln-434–Leu-600 enclose the Helicase C-terminal domain. The disordered stretch occupies residues Lys-607–Glu-632. Residues Glu-634–Val-669 enclose the UVR domain.

Belongs to the UvrB family. Forms a heterotetramer with UvrA during the search for lesions. Interacts with UvrC in an incision complex.

The protein localises to the cytoplasm. Functionally, the UvrABC repair system catalyzes the recognition and processing of DNA lesions. A damage recognition complex composed of 2 UvrA and 2 UvrB subunits scans DNA for abnormalities. Upon binding of the UvrA(2)B(2) complex to a putative damaged site, the DNA wraps around one UvrB monomer. DNA wrap is dependent on ATP binding by UvrB and probably causes local melting of the DNA helix, facilitating insertion of UvrB beta-hairpin between the DNA strands. Then UvrB probes one DNA strand for the presence of a lesion. If a lesion is found the UvrA subunits dissociate and the UvrB-DNA preincision complex is formed. This complex is subsequently bound by UvrC and the second UvrB is released. If no lesion is found, the DNA wraps around the other UvrB subunit that will check the other stand for damage. The sequence is that of UvrABC system protein B from Actinobacillus pleuropneumoniae serotype 5b (strain L20).